Consider the following 99-residue polypeptide: Malonate decarboxylase acyl carrier protein (99 aa).

Position 25 is an O-(phosphoribosyl dephospho-coenzyme A)serine (S25).

It belongs to the MdcC family. Post-translationally, covalently binds the prosthetic group of malonate decarboxylase.

Its subcellular location is the cytoplasm. Subunit of malonate decarboxylase, it is an acyl carrier protein to which acetyl and malonyl thioester residues are bound via a 2'-(5''-phosphoribosyl)-3'-dephospho-CoA prosthetic group and turn over during the catalytic mechanism. The sequence is that of Malonate decarboxylase acyl carrier protein from Pseudomonas fluorescens (strain SBW25).